We begin with the raw amino-acid sequence, 116 residues long: Dynein light chain Tctex-type 3 (116 aa).

Residue Tyr-4 is modified to 3'-nitrotyrosine.

It belongs to the dynein light chain Tctex-type family. Homodimer. The cytoplasmic dynein 1 complex consists of two catalytic heavy chains (HCs) and a number of non-catalytic subunits presented by intermediate chains (ICs), light intermediate chains (LICs) and light chains (LCs); the composition seems to vary in respect to the IC, LIC and LC composition. The heavy chain homodimer serves as a scaffold for the probable homodimeric assembly of the respective non-catalytic subunits. The ICs and LICs bind directly to the HC dimer and the LCs assemble on the IC dimer. DYNLT1 and DYNLT3 compete for association with dynein IC (DYNC1I1 or DYNC1I2). Self-associates. Interacts with DYNC1I1 and DYNC1I2. Interacts with BUB3. Interacts with SATB1 in nucleus to form complex with matrix attachment regions (MARs) of DNA.

It is found in the nucleus. Its subcellular location is the cytoplasm. The protein localises to the cytoskeleton. The protein resides in the chromosome. It localises to the centromere. It is found in the kinetochore. Functionally, acts as one of several non-catalytic accessory components of the cytoplasmic dynein 1 complex that are thought to be involved in linking dynein to cargos and to adapter proteins that regulate dynein function. Cytoplasmic dynein 1 acts as a motor for the intracellular retrograde motility of vesicles and organelles along microtubules. Probably binds BUB3 as part of transport cargo. Required for the efficient progression through mitosis. The polypeptide is Dynein light chain Tctex-type 3 (Dynlt3) (Mus musculus (Mouse)).